The following is a 458-amino-acid chain: Phosphoglucosamine mutase (458 aa).

The Phosphoserine intermediate role is filled by Ser106. Mg(2+) is bound by residues Ser106, Asp247, Asp249, and Asp251. Phosphoserine is present on Ser106.

This sequence belongs to the phosphohexose mutase family. The cofactor is Mg(2+). Post-translationally, activated by phosphorylation.

It catalyses the reaction alpha-D-glucosamine 1-phosphate = D-glucosamine 6-phosphate. Catalyzes the conversion of glucosamine-6-phosphate to glucosamine-1-phosphate. The protein is Phosphoglucosamine mutase of Chlamydia pneumoniae (Chlamydophila pneumoniae).